The primary structure comprises 470 residues: Solvent efflux pump outer membrane protein SrpC (470 aa).

Positions 1-16 (MKFKSLPMFALLMLGG) are cleaved as a signal peptide. Cys-17 carries N-palmitoyl cysteine lipidation. Cys-17 carries S-diacylglycerol cysteine lipidation. Residues 104 to 123 (LDGQASGNRTRLPDDLSPTG) are disordered.

This sequence belongs to the outer membrane factor (OMF) (TC 1.B.17) family.

The protein resides in the cell outer membrane. In terms of biological role, the outer membrane component of an organic solvent efflux pump. Involved in export of a number of low log POW compounds including hexane (log POW 3.5), toluene (log POW 2.5) and dimethylphthalate (log POW 2.3). The solvent resistance phenotype has been postulated to depend on the operon expression level. The sequence is that of Solvent efflux pump outer membrane protein SrpC (srpC) from Pseudomonas putida (Arthrobacter siderocapsulatus).